The primary structure comprises 583 residues: Radixin (583 aa).

Positions 5–295 constitute an FERM domain; sequence INVRVTTMDA…GNHELYMRRR (291 aa). A 1,2-diacyl-sn-glycero-3-phospho-(1D-myo-inositol)-binding positions include 60 to 63 and K278; that span reads KLNK. Disordered stretches follow at residues 310–336 and 436–527; these read REEKHQKQLERAQLENEKKKREIAEKE and KKKE…VKKQ. Basic and acidic residues-rich tracts occupy residues 436 to 447 and 455 to 464; these read KKKEEEASEWQH and DLEKTKEELK. Residues 469 to 480 are compositionally biased toward pro residues; that stretch reads APPPPPPPPVIP. Composition is skewed to basic and acidic residues over residues 483 to 492 and 506 to 525; these read ENEHDEHDEN and MNHRSEEERVTETQKNERVK.

Its subcellular location is the cell membrane. The protein resides in the cytoplasm. The protein localises to the cytoskeleton. Its function is as follows. Probably plays a crucial role in the binding of the barbed end of actin filaments to the plasma membrane. The polypeptide is Radixin (RDX) (Gallus gallus (Chicken)).